The primary structure comprises 351 residues: Cytochrome c biogenesis protein CcsA (351 aa).

Helical transmembrane passes span 12-32, 37-57, 68-88, 97-117, 143-163, 259-279, 294-314, and 320-340; these read NISFGILFATMLIYWLGAAFP, LSILGSTGMAIANLCIATLLG, ISNLYESLFFLTWGITTIHLI, LVGVFTSPIAMGISAFAALTL, MMLSYATLIVGALLAIAFLII, IIGLGFPLLTIGIIAGAVWAN, WALITWLVFAAYLHARITKGW, and AILAATGFAVVWVCYLGVNLL.

The protein belongs to the CcmF/CycK/Ccl1/NrfE/CcsA family. May interact with ccs1.

It localises to the cellular thylakoid membrane. Its function is as follows. Required during biogenesis of c-type cytochromes (cytochrome c6 and cytochrome f) at the step of heme attachment. The sequence is that of Cytochrome c biogenesis protein CcsA from Trichodesmium erythraeum (strain IMS101).